We begin with the raw amino-acid sequence, 309 residues long: 2-phosphoglycerate kinase (309 aa).

The 88-residue stretch at 5 to 92 (NDIIVRGKSY…LWRMVLGRRP (88 aa)) folds into the ATP-cone domain.

The protein belongs to the 2-phosphoglycerate kinase family. A divalent metal cation is required as a cofactor.

It carries out the reaction (2R)-2-phosphoglycerate + ATP = (2R)-2,3-bisphosphoglycerate + ADP + H(+). It functions in the pathway thermoadapter biosynthesis; cyclic 2,3-diphosphoglycerate biosynthesis; cyclic 2,3-diphosphoglycerate from 2-phospho-D-glycerate: step 1/2. Its function is as follows. Catalyzes the phosphorylation of 2-phosphoglycerate to 2,3-diphosphoglycerate. Involved in the biosynthesis of cyclic 2,3-bisphosphoglycerate, a thermoprotectant. The protein is 2-phosphoglycerate kinase of Methanocaldococcus jannaschii (strain ATCC 43067 / DSM 2661 / JAL-1 / JCM 10045 / NBRC 100440) (Methanococcus jannaschii).